We begin with the raw amino-acid sequence, 361 residues long: Dihydroorotate dehydrogenase (quinone) (361 aa).

FMN is bound by residues 69-73 and threonine 93; that span reads AGFDK. Lysine 73 contacts substrate. 118–122 contacts substrate; sequence NRLGF. FMN is bound by residues asparagine 147 and asparagine 180. Asparagine 180 is a substrate binding site. Catalysis depends on serine 183, which acts as the Nucleophile. Asparagine 185 lines the substrate pocket. Lysine 221 and threonine 249 together coordinate FMN. Substrate is bound at residue 250–251; that stretch reads NT. FMN contacts are provided by residues glycine 271, glycine 300, and 321–322; that span reads YT.

Belongs to the dihydroorotate dehydrogenase family. Type 2 subfamily. In terms of assembly, monomer. Requires FMN as cofactor.

The protein localises to the cell membrane. It catalyses the reaction (S)-dihydroorotate + a quinone = orotate + a quinol. It participates in pyrimidine metabolism; UMP biosynthesis via de novo pathway; orotate from (S)-dihydroorotate (quinone route): step 1/1. In terms of biological role, catalyzes the conversion of dihydroorotate to orotate with quinone as electron acceptor. In Roseiflexus sp. (strain RS-1), this protein is Dihydroorotate dehydrogenase (quinone).